The following is a 149-amino-acid chain: Large ribosomal subunit protein uL13 (149 aa).

Belongs to the universal ribosomal protein uL13 family. In terms of assembly, part of the 50S ribosomal subunit.

Its function is as follows. This protein is one of the early assembly proteins of the 50S ribosomal subunit, although it is not seen to bind rRNA by itself. It is important during the early stages of 50S assembly. This is Large ribosomal subunit protein uL13 from Borrelia turicatae (strain 91E135).